We begin with the raw amino-acid sequence, 279 residues long: Biotin synthase (279 aa).

Residues 2 to 232 enclose the Radical SAM core domain; sequence VRNSRLDICS…NVTIKIAAGR (231 aa). [4Fe-4S] cluster is bound by residues cysteine 20, cysteine 24, and cysteine 27. The [2Fe-2S] cluster site is built by cysteine 96, cysteine 156, and lysine 227.

It belongs to the radical SAM superfamily. Biotin synthase family. As to quaternary structure, homodimer. [4Fe-4S] cluster serves as cofactor. It depends on [2Fe-2S] cluster as a cofactor.

It catalyses the reaction (4R,5S)-dethiobiotin + (sulfur carrier)-SH + 2 reduced [2Fe-2S]-[ferredoxin] + 2 S-adenosyl-L-methionine = (sulfur carrier)-H + biotin + 2 5'-deoxyadenosine + 2 L-methionine + 2 oxidized [2Fe-2S]-[ferredoxin]. Its pathway is cofactor biosynthesis; biotin biosynthesis; biotin from 7,8-diaminononanoate: step 2/2. Its function is as follows. Catalyzes the conversion of dethiobiotin (DTB) to biotin by the insertion of a sulfur atom into dethiobiotin via a radical-based mechanism. The chain is Biotin synthase from Thermotoga neapolitana (strain ATCC 49049 / DSM 4359 / NBRC 107923 / NS-E).